The chain runs to 246 residues: Probable transcriptional regulatory protein YebC (246 aa).

A disordered region spans residues 1–20; that stretch reads MAGHSKWANTRHRKAAQDAK.

The protein belongs to the TACO1 family.

It localises to the cytoplasm. This is Probable transcriptional regulatory protein YebC from Shigella boydii serotype 4 (strain Sb227).